Reading from the N-terminus, the 214-residue chain is Orotate phosphoribosyltransferase (214 aa).

Residue K26 coordinates 5-phospho-alpha-D-ribose 1-diphosphate. Residue 34–35 (FF) participates in orotate binding. 5-phospho-alpha-D-ribose 1-diphosphate is bound by residues 72-73 (YK), R99, K100, K103, H105, and 124-132 (DDVITAGTA). Residues T128 and R156 each coordinate orotate.

It belongs to the purine/pyrimidine phosphoribosyltransferase family. PyrE subfamily. As to quaternary structure, homodimer. Mg(2+) serves as cofactor.

It carries out the reaction orotidine 5'-phosphate + diphosphate = orotate + 5-phospho-alpha-D-ribose 1-diphosphate. Its pathway is pyrimidine metabolism; UMP biosynthesis via de novo pathway; UMP from orotate: step 1/2. In terms of biological role, catalyzes the transfer of a ribosyl phosphate group from 5-phosphoribose 1-diphosphate to orotate, leading to the formation of orotidine monophosphate (OMP). This chain is Orotate phosphoribosyltransferase, found in Proteus mirabilis (strain HI4320).